The following is a 25-amino-acid chain: Ribosome-inactivating protein charantin (25 aa).

As to quaternary structure, monomer.

It carries out the reaction Endohydrolysis of the N-glycosidic bond at one specific adenosine on the 28S rRNA.. In terms of biological role, inhibits cell-free translation in a rabbit reticulocyte lysate system. The sequence is that of Ribosome-inactivating protein charantin from Momordica charantia (Bitter gourd).